Reading from the N-terminus, the 340-residue chain is MDHAADRHRTDLMTITRFVLNEQTKHPESRGDFSILLSHIVLGCKFVCTAVNKAGLAKLLGLAGETNVQGEDQKKLDVLSNEVFIKALVSSNRTCILVSEEDEEATFVRPANRGKYCVVFDPLDGSSNIDCGVSIGTIFGIYMIKDGHEPTLDDVLQPGMNMLAAGYCMYGSSCTLVLSTGSGVNGFTLDPSLGEFILTHPDIKIPKKGKIYSVNEGNAKNWDSPTSKYVQSCKYPADGSSPKSLRYIGSMVADVHRTLLYGGIFLYPGDKKSPNGKLRVLYEVFPMSFLMEQAGGQAFTGKQRALDLVPEKIHERSPIFLGSYDDVEEIKKLYAAEEQN.

Mg(2+)-binding residues include E71, E100, D121, L123, and D124. Residues 124 to 127, N215, Y247, Y267, and K277 contribute to the substrate site; that span reads DGSS. A Mg(2+)-binding site is contributed by E283.

The protein belongs to the FBPase class 1 family. It depends on Mg(2+) as a cofactor.

The protein localises to the cytoplasm. The catalysed reaction is beta-D-fructose 1,6-bisphosphate + H2O = beta-D-fructose 6-phosphate + phosphate. The protein is Fructose-1,6-bisphosphatase, cytosolic of Solanum tuberosum (Potato).